Consider the following 430-residue polypeptide: Serine--tRNA ligase (430 aa).

231–233 (TSE) is a binding site for L-serine. ATP is bound at residue 262-264 (RSE). L-serine is bound at residue Glu-285. 349 to 352 (EISS) lines the ATP pocket. Ser-385 contributes to the L-serine binding site.

It belongs to the class-II aminoacyl-tRNA synthetase family. Type-1 seryl-tRNA synthetase subfamily. Homodimer. The tRNA molecule binds across the dimer.

The protein resides in the cytoplasm. The enzyme catalyses tRNA(Ser) + L-serine + ATP = L-seryl-tRNA(Ser) + AMP + diphosphate + H(+). It carries out the reaction tRNA(Sec) + L-serine + ATP = L-seryl-tRNA(Sec) + AMP + diphosphate + H(+). The protein operates within aminoacyl-tRNA biosynthesis; selenocysteinyl-tRNA(Sec) biosynthesis; L-seryl-tRNA(Sec) from L-serine and tRNA(Sec): step 1/1. In terms of biological role, catalyzes the attachment of serine to tRNA(Ser). Is also able to aminoacylate tRNA(Sec) with serine, to form the misacylated tRNA L-seryl-tRNA(Sec), which will be further converted into selenocysteinyl-tRNA(Sec). The polypeptide is Serine--tRNA ligase (Jannaschia sp. (strain CCS1)).